The chain runs to 392 residues: Imidazolonepropionase (392 aa).

The Fe(3+) site is built by H70 and H72. Zn(2+) is bound by residues H70 and H72. 3 residues coordinate 4-imidazolone-5-propanoate: R79, Y137, and H164. An N-formimidoyl-L-glutamate-binding site is contributed by Y137. H227 contributes to the Fe(3+) binding site. H227 serves as a coordination point for Zn(2+). Residue Q230 coordinates 4-imidazolone-5-propanoate. Fe(3+) is bound at residue D301. D301 lines the Zn(2+) pocket. N-formimidoyl-L-glutamate is bound by residues N303 and G305. T306 contacts 4-imidazolone-5-propanoate.

The protein belongs to the metallo-dependent hydrolases superfamily. HutI family. The cofactor is Zn(2+). Fe(3+) is required as a cofactor.

It is found in the cytoplasm. It carries out the reaction 4-imidazolone-5-propanoate + H2O = N-formimidoyl-L-glutamate. The protein operates within amino-acid degradation; L-histidine degradation into L-glutamate; N-formimidoyl-L-glutamate from L-histidine: step 3/3. In terms of biological role, catalyzes the hydrolytic cleavage of the carbon-nitrogen bond in imidazolone-5-propanoate to yield N-formimidoyl-L-glutamate. It is the third step in the universal histidine degradation pathway. The protein is Imidazolonepropionase of Nocardia farcinica (strain IFM 10152).